We begin with the raw amino-acid sequence, 22 residues long: Oxygen-evolving enhancer protein 2 (22 aa).

This sequence belongs to the PsbP family.

It localises to the plastid. The protein localises to the chloroplast thylakoid membrane. Its function is as follows. May be involved in the regulation of photosystem II. This Physcomitrium patens (Spreading-leaved earth moss) protein is Oxygen-evolving enhancer protein 2.